The sequence spans 201 residues: Ribonuclease HII (201 aa).

The RNase H type-2 domain occupies 10–200 (LIEAGCDEAG…LGDGQLELFS (191 aa)). Positions 16, 17, and 108 each coordinate a divalent metal cation.

It belongs to the RNase HII family. Mn(2+) is required as a cofactor. Mg(2+) serves as cofactor.

It localises to the cytoplasm. The catalysed reaction is Endonucleolytic cleavage to 5'-phosphomonoester.. Endonuclease that specifically degrades the RNA of RNA-DNA hybrids. The polypeptide is Ribonuclease HII (Bacteroides fragilis (strain YCH46)).